A 214-amino-acid polypeptide reads, in one-letter code: Nigrelysin (214 aa).

A signal peptide spans Met-1–Ala-21. A propeptide spanning residues Leu-22–Arg-35 is cleaved from the precursor. Residues Glu-38–Ala-47 form a plays an important role in the hemolytic activity region. The tract at residues Gly-46–Ser-65 is N-terminal region. Positions 89, 122, 140, 142, 168, 172, and 173 each coordinate phosphocholine. Residues Ser-140–Lys-155 are trp-rich region, which is important for the binding to lipid membrane. The Cell attachment site, crucial for protein stability signature appears at Lys-179–Asp-181.

This sequence belongs to the actinoporin family. Sea anemone subfamily. In terms of assembly, octamer or nonamer in membranes. Monomer in the soluble state.

It is found in the secreted. Its subcellular location is the nematocyst. The protein resides in the target cell membrane. Its function is as follows. Pore-forming protein that forms cation-selective hydrophilic pores in cell membranes and causes cytolysis. Pore formation is a multi-step process that involves specific recognition of membrane sphingomyelin (but neither cholesterol nor phosphatidylcholine) using aromatic rich region and adjacent phosphocholine (POC) binding site, firm binding to the membrane (mainly driven by hydrophobic interactions) accompanied by the transfer of the N-terminal region to the lipid-water interface and finally pore formation after oligomerization of monomers. This protein shows potent hemolytic activity (EC(50)=0.09 nM), as well as potent cytotoxic activity on nucleated cells (L1210 cells). The cytotoxic process starts with cellular swelling that is time and dose dependent and occurs up to a critical volume, probably due to influx of water via pores opened by this actinoporin. The second phase consists of the final loss of membrane integrity that leads to cytolysis. This is Nigrelysin from Anthopleura nigrescens (Sea anemone).